Here is a 447-residue protein sequence, read N- to C-terminus: Voltage-gated purine nucleotide uniporter SLC17A9 (447 aa).

A disordered region spans residues Met1–Asp26. 11 helical membrane passes run Ile40–Val60, Gly74–Leu94, Val103–His123, Leu129–Ala149, Thr169–Leu189, Cys192–Val212, Val252–Trp272, Trp287–Ile307, Val327–Leu347, Gly380–Leu400, and Cys413–Gly433.

The protein belongs to the major facilitator superfamily. Sodium/anion cotransporter family. In brain, specifically expressed in the medulla and is associated with chromaffin granules (at protein level). Predominantly expressed in adrenal gland, brain and thyroid.

Its subcellular location is the cytoplasmic vesicle. It is found in the secretory vesicle. The protein localises to the chromaffin granule membrane. It localises to the secretory vesicle membrane. The protein resides in the lysosome membrane. It carries out the reaction ATP(in) = ATP(out). The enzyme catalyses ADP(in) = ADP(out). The catalysed reaction is GTP(in) = GTP(out). With respect to regulation, activity is chloride-dependent. Its function is as follows. Voltage-gated ATP nucleotide uniporter that can also transport the purine nucleotides ADP and GTP. Uses the membrane potential as the driving force to control ATP accumulation in lysosomes and secretory vesicles. By controlling ATP storage in lysosomes, regulates ATP-dependent proteins of these organelles. Also indirectly regulates the exocytosis of ATP through its import into lysosomes in astrocytes and secretory vesicles such as adrenal chromaffin granules, mucin granules and synaptic vesicles. The chain is Voltage-gated purine nucleotide uniporter SLC17A9 from Mus musculus (Mouse).